Reading from the N-terminus, the 332-residue chain is Holliday junction branch migration complex subunit RuvB (332 aa).

The interval 1-181 is large ATPase domain (RuvB-L); it reads MSRILDNELM…FGITGHMEYY (181 aa). ATP-binding positions include Leu-20, Arg-21, Gly-62, Lys-65, Thr-66, Thr-67, 128–130, Arg-171, Tyr-181, and Arg-218; that span reads EDF. Position 66 (Thr-66) interacts with Mg(2+). The interval 182–252 is small ATPAse domain (RuvB-S); sequence EAGDLTEIVE…ITDQALSMLD (71 aa). The interval 255–332 is head domain (RuvB-H); that stretch reads QEGLDYVDQK…EHLGYEYMKE (78 aa). Positions 291, 310, 312, and 315 each coordinate DNA.

The protein belongs to the RuvB family. Homohexamer. Forms an RuvA(8)-RuvB(12)-Holliday junction (HJ) complex. HJ DNA is sandwiched between 2 RuvA tetramers; dsDNA enters through RuvA and exits via RuvB. An RuvB hexamer assembles on each DNA strand where it exits the tetramer. Each RuvB hexamer is contacted by two RuvA subunits (via domain III) on 2 adjacent RuvB subunits; this complex drives branch migration. In the full resolvosome a probable DNA-RuvA(4)-RuvB(12)-RuvC(2) complex forms which resolves the HJ.

The protein localises to the cytoplasm. It carries out the reaction ATP + H2O = ADP + phosphate + H(+). In terms of biological role, the RuvA-RuvB-RuvC complex processes Holliday junction (HJ) DNA during genetic recombination and DNA repair, while the RuvA-RuvB complex plays an important role in the rescue of blocked DNA replication forks via replication fork reversal (RFR). RuvA specifically binds to HJ cruciform DNA, conferring on it an open structure. The RuvB hexamer acts as an ATP-dependent pump, pulling dsDNA into and through the RuvAB complex. RuvB forms 2 homohexamers on either side of HJ DNA bound by 1 or 2 RuvA tetramers; 4 subunits per hexamer contact DNA at a time. Coordinated motions by a converter formed by DNA-disengaged RuvB subunits stimulates ATP hydrolysis and nucleotide exchange. Immobilization of the converter enables RuvB to convert the ATP-contained energy into a lever motion, pulling 2 nucleotides of DNA out of the RuvA tetramer per ATP hydrolyzed, thus driving DNA branch migration. The RuvB motors rotate together with the DNA substrate, which together with the progressing nucleotide cycle form the mechanistic basis for DNA recombination by continuous HJ branch migration. Branch migration allows RuvC to scan DNA until it finds its consensus sequence, where it cleaves and resolves cruciform DNA. This is Holliday junction branch migration complex subunit RuvB from Streptococcus sanguinis (strain SK36).